The sequence spans 82 residues: UPF0291 protein LJ_1507 (82 aa).

A disordered region spans residues 61 to 82 (DGKEVTSEKAKEAQRRKGLRKD).

This sequence belongs to the UPF0291 family.

Its subcellular location is the cytoplasm. The sequence is that of UPF0291 protein LJ_1507 from Lactobacillus johnsonii (strain CNCM I-12250 / La1 / NCC 533).